The sequence spans 430 residues: Transcription factor PIF4 (430 aa).

Disordered stretches follow at residues 42 to 71 (QTHR…DQET), 97 to 136 (MDPL…VMPP), 160 to 183 (TVGP…SHDR), 223 to 266 (DRKR…NLSE), and 405 to 430 (SSPA…RLDH). The segment covering 43 to 60 (THREQTQTQKQDHHEEAL) has biased composition (basic and acidic residues). A compositionally biased stretch (polar residues) spans 61-71 (RSSTFLEDQET). Residues 126–136 (CPDPPPQVMPP) are compositionally biased toward pro residues. Residues 160-175 (TVGPSHCGSNPSQNDL) are compositionally biased toward polar residues. Over residues 244–253 (NKSNQRSGSN) the composition is skewed to low complexity. Residues 257–266 (RAAEVHNLSE) show a composition bias toward basic and acidic residues. Residues 257–306 (RAAEVHNLSERRRRDRINERMKALQELIPHCSKTDKASILDEAIDYLKSL) enclose the bHLH domain. The span at 405-419 (SSPAGQQSQQPSSVP) shows a compositional bias: low complexity.

This sequence belongs to the bHLH protein family. As to quaternary structure, interacts preferentially with the Pfr form of phytochrome B (phyB). Binds DNA as a homodimer, but once bound to DNA, loses its capacity to interact with phyB. Interacts with APRR1/TOC1 and PIF3. Binds to RGL2 and RGA. Forms non-functional heterodimer with HFR1. Interacts with PHYB, CRY1 and CRY2 in the nucleus in response to low blue light (LBL). Interacts with FYPP1 and FYPP3. Associates to PTAC12/HMR/PAP5, which acts as a transcriptional coactivator to trigger the thermoresponsive growth-relevant genes and promote warm-temperature-dependent PIF4 accumulation. Interacts with MED14. In terms of tissue distribution, mainly expressed in leaves, stems and seedlings, and, to a lower extent, in fruits, flowers and roots.

It is found in the nucleus. Transcription factor acting negatively in the phytochrome B signaling pathway. May regulate the expression of a subset of genes involved in cell expansion by binding to the G-box motif. Activated by CRY1 and CRY2 in response to low blue light (LBL) by direct binding at chromatin on E-box variant 5'-CA[CT]GTG-3' to stimulate specific gene expression to adapt global physiology (e.g. hypocotyl elongation in low blue light). Element of a PIF4/HMR/MED14-dependent thermoresponsive process; collaboratively with its transcriptional coactivator PTAC12/HMR/PAP5, involved in the regulation of thermoresponsive growth-relevant genes (e.g. mainly involved in biosynthesis and signaling of the phytohormone auxin) leading to daytime warm temperature elicitation of MED14-dependent thermomorphogenesis (e.g. hypocotyl elongation). This chain is Transcription factor PIF4, found in Arabidopsis thaliana (Mouse-ear cress).